Here is a 334-residue protein sequence, read N- to C-terminus: Ferredoxin--NADP reductase (334 aa).

The FAD site is built by Asp33, Gln41, Tyr46, Ala86, Phe120, Asp286, and Thr327.

This sequence belongs to the ferredoxin--NADP reductase type 2 family. Homodimer. FAD is required as a cofactor.

It catalyses the reaction 2 reduced [2Fe-2S]-[ferredoxin] + NADP(+) + H(+) = 2 oxidized [2Fe-2S]-[ferredoxin] + NADPH. In Rickettsia massiliae (strain Mtu5), this protein is Ferredoxin--NADP reductase.